The sequence spans 359 residues: N-acetylhexosamine 1-kinase (359 aa).

A Protein kinase domain is found at 21–359 (VTGIEPYGDG…IVADIMEAAR (339 aa)).

Belongs to the protein kinase superfamily. Mg(2+) serves as cofactor.

It catalyses the reaction N-acetyl-D-hexosamine + ATP = N-acetyl-alpha-D-hexosamine 1-phosphate + ADP + H(+). Phosphorylates both N-acetylglucosamine (GlcNAc) and N-acetylgalactosamine (GalNAc) at similar rates. Involved in the lacto-N-biose I/galacto-N-biose (LNB/GNB) degradation pathway, which is important for host intestinal colonization by bifidobacteria. Also accepts GTP and ITP as phosphate donors. In vitro, can phosphorylate several GlcNAc and GalNAc derivatives. This chain is N-acetylhexosamine 1-kinase (nahK), found in Bifidobacterium longum subsp. longum (strain ATCC 15707 / DSM 20219 / JCM 1217 / NCTC 11818 / E194b).